The primary structure comprises 85 residues: Alpha-insect toxin Bot14 (85 aa).

Residues 1–18 (MSSLMISTAMKGKAPYRQ) form the signal peptide. One can recognise an LCN-type CS-alpha/beta domain in the interval 20–84 (RDGYIAQPHN…GIIVHGEKCH (65 aa)). 4 cysteine pairs are disulfide-bonded: C30–C83, C34–C55, C41–C65, and C45–C67.

It belongs to the long (4 C-C) scorpion toxin superfamily. Sodium channel inhibitor family. Alpha subfamily. As to expression, expressed by the venom gland.

It is found in the secreted. Its function is as follows. Alpha toxins bind voltage-independently at site-3 of sodium channels (Nav) and inhibit the inactivation of the activated channels, thereby blocking neuronal transmission. This toxin is active only on insects. The polypeptide is Alpha-insect toxin Bot14 (Buthus occitanus tunetanus (Common European scorpion)).